The primary structure comprises 378 residues: Beta sliding clamp (378 aa).

It belongs to the beta sliding clamp family. Forms a ring-shaped head-to-tail homodimer around DNA which binds and tethers DNA polymerases and other proteins to the DNA. The DNA replisome complex has a single clamp-loading complex (3 tau and 1 each of delta, delta', psi and chi subunits) which binds 3 Pol III cores (1 core on the leading strand and 2 on the lagging strand) each with a beta sliding clamp dimer. Additional proteins in the replisome are other copies of gamma, psi and chi, Ssb, DNA helicase and RNA primase. Interacts with YabA, and via YabA, with DnaA. During sporulation probably interacts with SirA.

The protein localises to the cytoplasm. The protein resides in the nucleoid. In terms of biological role, confers DNA tethering and processivity to DNA polymerases and other proteins. Acts as a clamp, forming a ring around DNA (a reaction catalyzed by the clamp-loading complex) which diffuses in an ATP-independent manner freely and bidirectionally along dsDNA. Initially characterized for its ability to contact the catalytic subunit of DNA polymerase III (Pol III), a complex, multichain enzyme responsible for most of the replicative synthesis in bacteria; Pol III exhibits 3'-5' exonuclease proofreading activity. The beta chain is required for initiation of replication as well as for processivity of DNA replication. Overexpression in vivo stimulates inititation of DNA replication from oriC. Increased levels of DnaN remove YabA from its association with DnaA on the chromosome, allowing DnaA to bind to its targets. Its interaction with DnaA probably serves as a sink to prevent excessive replication initiation. In Bacillus subtilis (strain 168), this protein is Beta sliding clamp.